The primary structure comprises 1478 residues: Zinc finger protein 518A (1478 aa).

4 consecutive C2H2-type zinc fingers follow at residues 152–174, 209–231, 236–258, and 264–287; these read FPCE…RKTH, FQCE…IHRH, YKCG…LRVH, and FTCH…ITLH. The tract at residues 355–394 is disordered; it reads TQTKSEDQSQEQLNEEKGGRQHCEDGDKPIESGSEKATVL. Lysine 358 is covalently cross-linked (Glycyl lysine isopeptide (Lys-Gly) (interchain with G-Cter in SUMO2)). A compositionally biased stretch (basic and acidic residues) spans 368–388; sequence NEEKGGRQHCEDGDKPIESGS. Glycyl lysine isopeptide (Lys-Gly) (interchain with G-Cter in SUMO2) cross-links involve residues lysine 390 and lysine 428. A disordered region spans residues 464 to 484; sequence PSPALQPNTEKESTANLPPQA. Lysine 518 is covalently cross-linked (Glycyl lysine isopeptide (Lys-Gly) (interchain with G-Cter in SUMO2)). At serine 652 the chain carries Phosphoserine. The disordered stretch occupies residues 656 to 694; sequence VCENLQRESSNKTVTQQSTSDSDTTSPLRKESSNSDSLL. Residues 670–681 show a composition bias toward low complexity; it reads TQQSTSDSDTTS. Residues lysine 707, lysine 792, lysine 882, lysine 895, lysine 987, lysine 1008, lysine 1041, lysine 1055, lysine 1078, lysine 1180, and lysine 1441 each participate in a glycyl lysine isopeptide (Lys-Gly) (interchain with G-Cter in SUMO2) cross-link. Residues 1444-1466 form a C2H2-type 5 zinc finger; that stretch reads FNCWFCGRVFDNQDVWAGHGQRH.

Belongs to the krueppel C2H2-type zinc-finger protein family.

It is found in the nucleus. Through its association with the EHMT1-EHMT2/G9A and PRC2/EED-EZH2 histone methyltransferase complexes may function in gene silencing, regulating repressive post-translational methylation of histone tails at promoters of target genes. This is Zinc finger protein 518A (Znf518a) from Rattus norvegicus (Rat).